Reading from the N-terminus, the 445-residue chain is Ribosomal protein uS12 methylthiotransferase RimO (445 aa).

The 111-residue stretch at 11-121 folds into the MTTase N-terminal domain; the sequence is PKISFVSLGC…VLDAVHRASP (111 aa). Positions 20, 56, 85, 152, 156, and 159 each coordinate [4Fe-4S] cluster. Positions 138-375 constitute a Radical SAM core domain; the sequence is LTPRHYAYLK…MARQQKISAR (238 aa). The 67-residue stretch at 378-444 folds into the TRAM domain; the sequence is KRKVGTRQQI…EYDLHGTVAG (67 aa).

It belongs to the methylthiotransferase family. RimO subfamily. [4Fe-4S] cluster serves as cofactor.

It localises to the cytoplasm. The catalysed reaction is L-aspartate(89)-[ribosomal protein uS12]-hydrogen + (sulfur carrier)-SH + AH2 + 2 S-adenosyl-L-methionine = 3-methylsulfanyl-L-aspartate(89)-[ribosomal protein uS12]-hydrogen + (sulfur carrier)-H + 5'-deoxyadenosine + L-methionine + A + S-adenosyl-L-homocysteine + 2 H(+). Its function is as follows. Catalyzes the methylthiolation of an aspartic acid residue of ribosomal protein uS12. This Bradyrhizobium sp. (strain ORS 278) protein is Ribosomal protein uS12 methylthiotransferase RimO.